The sequence spans 490 residues: Aspartyl/glutamyl-tRNA(Asn/Gln) amidotransferase subunit B (490 aa).

Belongs to the GatB/GatE family. GatB subfamily. In terms of assembly, heterotrimer of A, B and C subunits.

It carries out the reaction L-glutamyl-tRNA(Gln) + L-glutamine + ATP + H2O = L-glutaminyl-tRNA(Gln) + L-glutamate + ADP + phosphate + H(+). The enzyme catalyses L-aspartyl-tRNA(Asn) + L-glutamine + ATP + H2O = L-asparaginyl-tRNA(Asn) + L-glutamate + ADP + phosphate + 2 H(+). In terms of biological role, allows the formation of correctly charged Asn-tRNA(Asn) or Gln-tRNA(Gln) through the transamidation of misacylated Asp-tRNA(Asn) or Glu-tRNA(Gln) in organisms which lack either or both of asparaginyl-tRNA or glutaminyl-tRNA synthetases. The reaction takes place in the presence of glutamine and ATP through an activated phospho-Asp-tRNA(Asn) or phospho-Glu-tRNA(Gln). This is Aspartyl/glutamyl-tRNA(Asn/Gln) amidotransferase subunit B from Burkholderia vietnamiensis (strain G4 / LMG 22486) (Burkholderia cepacia (strain R1808)).